The chain runs to 548 residues: Chaperonin GroEL (548 aa).

ATP-binding positions include 29-32, lysine 50, 86-90, glycine 414, and aspartate 493; these read THGP and DGTTT.

It belongs to the chaperonin (HSP60) family. In terms of assembly, forms a cylinder of 14 subunits composed of two heptameric rings stacked back-to-back. Interacts with the co-chaperonin GroES.

The protein resides in the cytoplasm. It catalyses the reaction ATP + H2O + a folded polypeptide = ADP + phosphate + an unfolded polypeptide.. In terms of biological role, together with its co-chaperonin GroES, plays an essential role in assisting protein folding. The GroEL-GroES system forms a nano-cage that allows encapsulation of the non-native substrate proteins and provides a physical environment optimized to promote and accelerate protein folding. This Desulfatibacillum aliphaticivorans protein is Chaperonin GroEL.